A 185-amino-acid polypeptide reads, in one-letter code: Ribosome-recycling factor (185 aa).

It belongs to the RRF family.

It is found in the cytoplasm. Its function is as follows. Responsible for the release of ribosomes from messenger RNA at the termination of protein biosynthesis. May increase the efficiency of translation by recycling ribosomes from one round of translation to another. This chain is Ribosome-recycling factor, found in Wolbachia pipientis wMel.